Here is a 308-residue protein sequence, read N- to C-terminus: MLTVQELVDDNADNIPFNWIAGHGAADRAIPDDGMAAADLVGHLNLIHPSRVQVFGQEELAYYTRFDLRRRMHHMDELLIGGVPAILLADGLSAPQDLIDQCDQHQVPLLSTPVAAAQLIDLLRIYLGKKLAPTTTVHGVFLDVLGLGVLITGESGLGKSELALELISRGHGLVADDAVEFSRTAPNMIEGHCPQLLQNLLEVRGLGLLDIRTIFGETSVRRKMRLKLIVHLVRATAQDKFERLPLQDITQDMLGLPVRKVMLQVAAGRNLAVLVEAAVRNTILKLRGIDTLGEFMERQAMAILQSSK.

Residues H138 and K159 contribute to the active site. 153 to 160 (GESGLGKS) serves as a coordination point for ATP. Position 160 (S160) interacts with Mg(2+). D177 functions as the Proton acceptor; for phosphorylation activity. Proton donor; for dephosphorylation activity in the catalytic mechanism. The important for the catalytic mechanism of both phosphorylation and dephosphorylation stretch occupies residues 201-210 (LEVRGLGLLD). A Mg(2+)-binding site is contributed by E202. The active site involves R243. The important for the catalytic mechanism of dephosphorylation stretch occupies residues 264 to 269 (QVAAGR).

Belongs to the HPrK/P family. In terms of assembly, homohexamer. The cofactor is Mg(2+).

It carries out the reaction [HPr protein]-L-serine + ATP = [HPr protein]-O-phospho-L-serine + ADP + H(+). It catalyses the reaction [HPr protein]-O-phospho-L-serine + phosphate + H(+) = [HPr protein]-L-serine + diphosphate. Its function is as follows. Catalyzes the ATP- as well as the pyrophosphate-dependent phosphorylation of a specific serine residue in HPr, a phosphocarrier protein of the phosphoenolpyruvate-dependent sugar phosphotransferase system (PTS). HprK/P also catalyzes the pyrophosphate-producing, inorganic phosphate-dependent dephosphorylation (phosphorolysis) of seryl-phosphorylated HPr (P-Ser-HPr). The sequence is that of HPr kinase/phosphorylase from Bordetella avium (strain 197N).